Reading from the N-terminus, the 467-residue chain is MLAKRIKWFHVLIAVVCVVGLIGFFHNHSLKKETVMNKVRTDSQYGNVEIATLVNDGKTFNYAVNYPVFKNEKMDSALKRFAEKEVRQFQKETKDVDQEHTTKRNELNVDYKIVHYAKQTVAIVFNEYKYIGGAHGQTVKKTFNYDFSKQAFLSIDDIFKEDADYLHKLSLIAYHELKKNKDIAADDALLKEGTAPKKENFSRFAIKEDYIELYFDTYQVAAGYLGEQSIAIKKSLLKDILKEQYIDKAKNKNKIKEQKPKHEVISLPKEETVDPNQKVIALTFDDGPNPATTNQILDSLKKYKGHATFFVLGSRVQYYPETLIRMLKEGNEVGNHSWSHPLLTRLSVKEALKQINDTQDIIEKISGYRPTLVRPPYGGINDELRSQMKMDVALWDVDPEDWKDRNKKTIVDRVMNQAGDGRTILIHDIYRTSADAADEIIKKLTDQGYQLVTVSQLEEVKKQREAK.

The chain crosses the membrane as a helical span at residues Ile-6 to His-26. The 175-residue stretch at Lys-278–Val-452 folds into the NodB homology domain. Asp-285 serves as the catalytic Proton acceptor. Asp-286, His-336, and His-340 together coordinate a divalent metal cation. His-427 functions as the Proton donor in the catalytic mechanism.

It in the N-terminal section; belongs to the RsiV family. In the C-terminal section; belongs to the polysaccharide deacetylase family.

It localises to the cell membrane. Activated by divalent metal cations; Mn(2+) is the most efficient, followed by Ca(2+) and Mg(2+). In contrast to PgdA from S.pneumoniae, these ions are not absolutely required for deacetylase activity. Its function is as follows. Catalyzes the deacetylation of N-acetylmuramic acid (MurNAc) residues in peptidoglycan, a modification that confers resistance to lysosyme. Is not able to deacetylate N-acetylglucosamine (GlcNAc) residues in peptidoglycan, but can deacylate chitin oligomers such as GlcNAc4 and GlcNAc5. Is essentially not active toward chitosan (partially deacetylated GlcNAc polymer) and has very low activity toward chitin (GlcNAc polymer). Does not deacetylate GlcNAc. The chain is Peptidoglycan-N-acetylmuramic acid deacetylase PdaC (pdaC) from Bacillus subtilis (strain 168).